Reading from the N-terminus, the 773-residue chain is Transducin-like enhancer protein 4 (773 aa).

3 disordered regions span residues 1–22 (MIRD…QPAQ), 140–162 (HGHG…AIPP), and 182–357 (LPIK…DPLA). The q domain stretch occupies residues 1 to 136 (MIRDLSKMYP…AIIGQQLQAQ (136 aa)). The tract at residues 137-204 (HLSHGHGLPV…HQRDRDSIKS (68 aa)) is GP domain. Residues 183–202 (PIKDEKKHHDNDHQRDRDSI) show a composition bias toward basic and acidic residues. Residues 203–214 (KSSSVSPSASFR) show a composition bias toward low complexity. The ccN domain stretch occupies residues 205–274 (SSVSPSASFR…SPRGSPAHSP (70 aa)). Phosphoserine occurs at positions 208, 212, 216, and 222. Over residues 215–252 (GSEKHRNSTDYSSESKKQKTEEKEIAARYDSDGEKSDD) the composition is skewed to basic and acidic residues. N6-acetyllysine is present on Lys-237. Ser-245 is subject to Phosphoserine. Ser-250 is modified (phosphoserine; by CK2). At Ser-265 the chain carries Phosphoserine; by CDK1. Phosphoserine is present on residues Ser-269 and Ser-273. Over residues 273–289 (SPRENGLDKTRLLKKDA) the composition is skewed to basic and acidic residues. An SP domain region spans residues 275-452 (RENGLDKTRL…PGGKPAYSFH (178 aa)). Lys-281 carries the N6-acetyllysine modification. A compositionally biased stretch (low complexity) spans 290–305 (PISPASVASSSSTPSS). Ser-292 is modified (phosphoserine). Residues 317 to 328 (TTPVSKSNTPTP) are compositionally biased toward polar residues. The residue at position 318 (Thr-318) is a Phosphothreonine. Ser-321 and Ser-323 each carry phosphoserine. A phosphothreonine mark is found at Thr-325, Thr-327, Thr-334, and Thr-340. Ser-419 bears the Phosphoserine mark. WD repeat units lie at residues 485–523 (NHGE…NKSP), 531–570 (NRDN…PRIK), 575–614 (SSAP…LVRQ), 617–656 (GHTD…QLQQ), 658–697 (DFTS…KYQL), 699–738 (LHES…SIFQ), and 740–773 (KESS…EVIY).

This sequence belongs to the WD repeat Groucho/TLE family. In terms of assembly, homooligomer and heterooligomer with other family members. Interacts with PAX5. Interacts with LEF1, TCF7, TCF7L1 and TCF7L2. Interacts with ZNF703; TLE4 may mediate ZNF703 transcriptional repression. Interacts with SIX3 and SIX6. Interacts with PAX2. Interacts with TLE1. Post-translationally, phosphorylated. PAX5 binding increases phosphorylation. Ubiquitinated by XIAP/BIRC4. In terms of tissue distribution, expressed in bone marrow-derived macrophages.

It localises to the nucleus. Its function is as follows. Transcriptional corepressor that binds to a number of transcription factors. Inhibits the transcriptional activation mediated by PAX5, and by CTNNB1 and TCF family members in Wnt signaling. The effects of full-length TLE family members may be modulated by association with dominant-negative AES. Essential for the transcriptional repressor activity of SIX3 during retina and lens development and for SIX3 transcriptional auto-repression. Involved in transcriptional repression of GNRHR and enhances MSX1-mediated transcriptional repression of CGA/alpha-GSU. The protein is Transducin-like enhancer protein 4 (Tle4) of Mus musculus (Mouse).